The primary structure comprises 329 residues: Malate dehydrogenase (329 aa).

12 to 18 (GAAGQIG) contributes to the NAD(+) binding site. Substrate-binding residues include Arg-93 and Arg-99. NAD(+) contacts are provided by residues Asn-106, Gln-113, and 130–132 (VGN). The substrate site is built by Asn-132 and Arg-163. The active-site Proton acceptor is His-188.

This sequence belongs to the LDH/MDH superfamily. MDH type 2 family.

The catalysed reaction is (S)-malate + NAD(+) = oxaloacetate + NADH + H(+). Strongly inhibited by Hg(2+) and Zn(2+). Activated by Na(+), NH(4)(+), Ca(2+), Cu(2+) and Mg(2+). Catalyzes the reversible oxidation of malate to oxaloacetate. Exhibits remarkably higher catalytic efficiency for oxaloacetate reduction than for malate oxidation in vitro. Highly specific for NAD(H). Can also use NADPH for oxaloacetate reduction, but catalytic efficiency is 97-fold higher with NADH. No activity detected with NADP(+) and malate. This is Malate dehydrogenase from Streptomyces avermitilis (strain ATCC 31267 / DSM 46492 / JCM 5070 / NBRC 14893 / NCIMB 12804 / NRRL 8165 / MA-4680).